Reading from the N-terminus, the 567-residue chain is MSSVVSDQMDIESSSAFSPAEPVVDGAFVSKHNLSAEAYQGFKECADSLLSGKIAQNEQLPFIQRTLQICENVILNFEDEKQHLMSDVLLVWAMKQQKLSIATLHTQQLHYKELDLINLQFEYFGELLQQTLSGLDYLKQYYPNVGFEEVHSKVRNLTHYFLYYSIIVSRQPPSVIVKCGEAENHRRSRFWFNTEIRILGGSAFGIDTNNENSNVNCYLITDETAKQLLNNAYLDIFESEEFCIEPNTSTFQKKDARGIKAKFDDMKVAKKVALRRDSVATKRYCLCYNIQLQTNCGIELVGKKVSLPFAVLVGPKADVEAKLFLERSFADLVRHPLSDIPTHVSCAEMADALEMKFQAIIETPQKNTDGPSVVQPRKFNMQTKQHLVMRMKPNNQGFLPLDNFMKLPVAEEFQHKKSASAEGDWKLVPFYDWFFKLAEITNKYLYSMWYDGLVYGFCSKEDAENILRCIPRSVLLVRFSDIEYGKIKISVKNRNGEIRHHWYEHADLNARSLNSELLSNHKFSDVDLIYPDIDLEVALGGRNKPRIRLPRNLAPDEIYFDNQGAAT.

An SH2 domain is found at 449–548 (WYDGLVYGFC…LGGRNKPRIR (100 aa)).

This sequence belongs to the transcription factor STAT family. May interact with sodium-dependent transporter snf-12; the interaction is probably direct.

Its subcellular location is the cytoplasm. The protein localises to the nucleus. It localises to the vesicle. Carries out a dual function: signal transduction and activation of transcription. Required, in concert with transcription factor elt-3, for up-regulation of the vacuolar H(+)-ATPase and acceleration of lysosome maturation at molt. As part of the innate immune response to molting and injury of the adult epidermis, positively regulates the expression of epidermal antimicrobial peptides, such as nlp-29. Through positively modulating the expression of epidermal antimicrobial peptides, such as nlp-29, plays a role in resistance to fungal infection and in the response to physical wounding and phorbol ester PMA treatment. Functions cell autonomously in the epidermis, in concert with sodium-dependent transporter snf-12, probably acting at vesicular membranes, downstream of a p38 MAPK/pmk-1 pathway. In Caenorhabditis elegans, this protein is Signal transducer and activator of transcription b.